Consider the following 770-residue polypeptide: Low-density lipoprotein receptor-related protein 3 (770 aa).

The N-terminal stretch at 1-36 (MEKRAAAGLEGAPGARAQLAVVCLVNIFLTGRLSSA) is a signal peptide. Residues 37-496 (VPALAACSGK…HGCLAAVPRK (460 aa)) are Extracellular-facing. 9 disulfide bridges follow: Cys43–Cys72, Cys99–Cys120, Cys166–Cys178, Cys173–Cys191, Cys185–Cys200, Cys212–Cys227, Cys219–Cys240, Cys234–Cys249, and Cys254–Cys282. The region spanning 43–159 (CSGKLEQHTE…QGFRLSYIRG (117 aa)) is the CUB 1 domain. Asn71 carries an N-linked (GlcNAc...) asparagine glycan. LDL-receptor class A domains are found at residues 165 to 201 (SCQA…GNCS) and 211 to 250 (LCPG…AGCP). Asn199 carries an N-linked (GlcNAc...) asparagine glycan. One can recognise a CUB 2 domain in the interval 254–365 (CGRRLGSFYG…HGFNATYQVK (112 aa)). N-linked (GlcNAc...) asparagine glycosylation occurs at Asn359. LDL-receptor class A domains lie at 415-453 (ACPP…KNCF) and 454-490 (SCQP…HGCL). 6 cysteine pairs are disulfide-bonded: Cys416–Cys430, Cys423–Cys443, Cys437–Cys452, Cys455–Cys467, Cys462–Cys480, and Cys474–Cys489. Residues 497–517 (VITAALIGSLVCGLLLVIALG) traverse the membrane as a helical segment. Residues 518-770 (CAFKLYSLRT…ASDDEALLVC (253 aa)) lie on the Cytoplasmic side of the membrane. The segment at 635–770 (LGDGFLQPAP…ASDDEALLVC (136 aa)) is disordered. The segment covering 689–707 (RDPECRPVDKDRKVCREPL) has biased composition (basic and acidic residues). Polar residues predominate over residues 729 to 738 (QVSTASSTLG). The segment covering 761-770 (ASDDEALLVC) has biased composition (acidic residues).

This sequence belongs to the LDLR family. In terms of assembly, binds GGA1 and GGA2. As to expression, widely expressed. Highly expressed in skeletal muscle and ovary. Expressed at intermediate level in heart, brain, liver, pancreas, prostate and small intestine. Weakly expressed in testis, colon and leukocyte.

It is found in the membrane. The protein resides in the coated pit. In terms of biological role, probable receptor, which may be involved in the internalization of lipophilic molecules and/or signal transduction. Its precise role is however unclear, since it does not bind to very low density lipoprotein (VLDL) or to LRPAP1 in vitro. This is Low-density lipoprotein receptor-related protein 3 (LRP3) from Homo sapiens (Human).